A 283-amino-acid polypeptide reads, in one-letter code: Nucleotide-binding protein IL0393 (283 aa).

Glycine 8–threonine 15 serves as a coordination point for ATP. Aspartate 56 to asparagine 59 contacts GTP.

This sequence belongs to the RapZ-like family.

Displays ATPase and GTPase activities. This is Nucleotide-binding protein IL0393 from Idiomarina loihiensis (strain ATCC BAA-735 / DSM 15497 / L2-TR).